Here is an 89-residue protein sequence, read N- to C-terminus: Small ribosomal subunit protein uS15 (89 aa).

The protein belongs to the universal ribosomal protein uS15 family. Part of the 30S ribosomal subunit. Forms a bridge to the 50S subunit in the 70S ribosome, contacting the 23S rRNA.

In terms of biological role, one of the primary rRNA binding proteins, it binds directly to 16S rRNA where it helps nucleate assembly of the platform of the 30S subunit by binding and bridging several RNA helices of the 16S rRNA. Forms an intersubunit bridge (bridge B4) with the 23S rRNA of the 50S subunit in the ribosome. The sequence is that of Small ribosomal subunit protein uS15 from Shewanella baltica (strain OS185).